Here is a 189-residue protein sequence, read N- to C-terminus: MINTNDFKTGKTIKFNNQIYQILEFLHVKPGKGSAFVRTKLRNLRTGSVIDYTFNAGIKVQPALITKIKMQLIYVLEDNYIFMNTQNYEQLEINKYQLKDFLKYLYEGLLVDIIFYENDEIVGISLPEKISIKVAYTEPGAKGDTKTNSLKDATLETGLVIKVPLFINIGEKIIINTETGLYLSRDNNK.

The protein belongs to the elongation factor P family.

The protein resides in the cytoplasm. The protein operates within protein biosynthesis; polypeptide chain elongation. Its function is as follows. Involved in peptide bond synthesis. Stimulates efficient translation and peptide-bond synthesis on native or reconstituted 70S ribosomes in vitro. Probably functions indirectly by altering the affinity of the ribosome for aminoacyl-tRNA, thus increasing their reactivity as acceptors for peptidyl transferase. The sequence is that of Elongation factor P from Aster yellows witches'-broom phytoplasma (strain AYWB).